The primary structure comprises 623 residues: Glutathione import ATP-binding protein GsiA (623 aa).

2 consecutive ABC transporter domains span residues 15 to 269 and 314 to 564; these read VENL…RALL and LRVR…RKLL. Residues 49-56 and 357-364 each bind ATP; these read GESGSGKS.

This sequence belongs to the ABC transporter superfamily. Glutathione importer (TC 3.A.1.5.11) family. As to quaternary structure, the complex is composed of two ATP-binding proteins (GsiA), two transmembrane proteins (GsiC and GsiD) and a solute-binding protein (GsiB).

Its subcellular location is the cell inner membrane. It carries out the reaction glutathione(out) + ATP + H2O = glutathione(in) + ADP + phosphate + H(+). Its function is as follows. Part of the ABC transporter complex GsiABCD involved in glutathione import. Responsible for energy coupling to the transport system. The sequence is that of Glutathione import ATP-binding protein GsiA from Shigella dysenteriae serotype 1 (strain Sd197).